We begin with the raw amino-acid sequence, 75 residues long: UPF0352 protein YejL (75 aa).

Belongs to the UPF0352 family.

In Shigella dysenteriae serotype 1 (strain Sd197), this protein is UPF0352 protein YejL.